The following is a 232-amino-acid chain: MAREGKRIRAAREGLEPMKLYAIDEAIKLVKSKASAKFDETVEISMNLGVDPRHADQMVRGVCNLPNGSGRTVRVAVFARGAKADDARAAGADIVGAEDLLEIVQGGKIEFDRCIATPDLMPLVGRLGKVLGPRGLMPNPKVGTVTMDVKGAVAAAKGGAVEFRVEKAGIIHAGVGKVSFDEQKLVENIKAFADAVAKAKPTGAKGTYIQRIAVTSTMGPGVKVEPSTVLTA.

This sequence belongs to the universal ribosomal protein uL1 family. Part of the 50S ribosomal subunit.

In terms of biological role, binds directly to 23S rRNA. The L1 stalk is quite mobile in the ribosome, and is involved in E site tRNA release. Protein L1 is also a translational repressor protein, it controls the translation of the L11 operon by binding to its mRNA. This Methylorubrum extorquens (strain CM4 / NCIMB 13688) (Methylobacterium extorquens) protein is Large ribosomal subunit protein uL1.